The sequence spans 273 residues: ATP synthase subunit delta (273 aa).

The interval 55–78 (TDPAQSARPRPSSPSVSSAPRSAA) is disordered. The segment covering 57 to 78 (PAQSARPRPSSPSVSSAPRSAA) has biased composition (low complexity).

This sequence belongs to the ATPase delta chain family. As to quaternary structure, F-type ATPases have 2 components, F(1) - the catalytic core - and F(0) - the membrane proton channel. F(1) has five subunits: alpha(3), beta(3), gamma(1), delta(1), epsilon(1). F(0) has three main subunits: a(1), b(2) and c(10-14). The alpha and beta chains form an alternating ring which encloses part of the gamma chain. F(1) is attached to F(0) by a central stalk formed by the gamma and epsilon chains, while a peripheral stalk is formed by the delta and b chains.

The protein localises to the cell membrane. Functionally, f(1)F(0) ATP synthase produces ATP from ADP in the presence of a proton or sodium gradient. F-type ATPases consist of two structural domains, F(1) containing the extramembraneous catalytic core and F(0) containing the membrane proton channel, linked together by a central stalk and a peripheral stalk. During catalysis, ATP synthesis in the catalytic domain of F(1) is coupled via a rotary mechanism of the central stalk subunits to proton translocation. In terms of biological role, this protein is part of the stalk that links CF(0) to CF(1). It either transmits conformational changes from CF(0) to CF(1) or is implicated in proton conduction. This is ATP synthase subunit delta from Streptomyces lividans.